Reading from the N-terminus, the 307-residue chain is Nicotinamide/nicotinic acid mononucleotide adenylyltransferase 2 (307 aa).

Residues Ser16 and Phe17 each contribute to the NAD(+) site. His24 contributes to the ATP binding site. Positions 92 and 95 each coordinate NAD(+). Residues Cys164 and Cys165 are each lipidated (S-palmitoyl cysteine). Residues Gly200, Asp202, Leu212, Trp213, and Arg232 each coordinate NAD(+). 271 to 274 (TKSR) contacts ATP.

This sequence belongs to the eukaryotic NMN adenylyltransferase family. As to quaternary structure, monomer. It depends on Mg(2+) as a cofactor. Degraded in response to injured neurite. Degradation is caused by polyubiquitination by MYCBP2 after recognition by FBXO45. Post-translationally, palmitoylated; palmitoylation is required for membrane association.

Its subcellular location is the golgi apparatus membrane. The protein localises to the cytoplasmic vesicle membrane. The protein resides in the cytoplasm. It localises to the cell projection. It is found in the axon. It catalyses the reaction beta-nicotinamide D-ribonucleotide + ATP + H(+) = diphosphate + NAD(+). The enzyme catalyses nicotinate beta-D-ribonucleotide + ATP + H(+) = deamido-NAD(+) + diphosphate. It functions in the pathway cofactor biosynthesis; NAD(+) biosynthesis; NAD(+) from nicotinamide D-ribonucleotide: step 1/1. The protein operates within cofactor biosynthesis; NAD(+) biosynthesis; deamido-NAD(+) from nicotinate D-ribonucleotide: step 1/1. Inhibited by P1-(adenosine-5')-P3-(nicotinamide-riboside-5')-triphosphate (Np3AD) and P1-(adenosine-5')-P4-(nicotinamide-riboside-5')-tetraphosphate (Np4AD). Nicotinamide/nicotinate-nucleotide adenylyltransferase that acts as an axon maintenance factor. Axon survival factor required for the maintenance of healthy axons: acts by delaying Wallerian axon degeneration, an evolutionarily conserved process that drives the loss of damaged axons. Catalyzes the formation of NAD(+) from nicotinamide mononucleotide (NMN) and ATP. Can also use the deamidated form; nicotinic acid mononucleotide (NaMN) as substrate but with a lower efficiency. Cannot use triazofurin monophosphate (TrMP) as substrate. Also catalyzes the reverse reaction, i.e. the pyrophosphorolytic cleavage of NAD(+). For the pyrophosphorolytic activity prefers NAD(+), NADH and NaAD as substrates and degrades nicotinic acid adenine dinucleotide phosphate (NHD) less effectively. Fails to cleave phosphorylated dinucleotides NADP(+), NADPH and NaADP(+). Also acts as an activator of ADP-ribosylation by supporting the catalytic activity of PARP16 and promoting mono-ADP-ribosylation of ribosomes by PARP16. May be involved in the maintenance of axonal integrity. This Bos taurus (Bovine) protein is Nicotinamide/nicotinic acid mononucleotide adenylyltransferase 2 (NMNAT2).